Consider the following 452-residue polypeptide: Methionine aminopeptidase 2 (452 aa).

Residues 1 to 96 are disordered; the sequence is MAVQALPEIN…VPLSTLFPNN (96 aa). Residues 18-35 are compositionally biased toward low complexity; it reads GAANAAAKGQAAQGTAGN. Acidic residues predominate over residues 36–53; the sequence is DDAENDESDEDKEDEQEV. Basic residues predominate over residues 62–77; that stretch reads GKKKKKKTKKKKKKGT. Substrate is bound at residue His202. The a divalent metal cation site is built by Asp222, Asp233, and His302. His310 is a binding site for substrate. The a divalent metal cation site is built by Glu338 and Glu433.

Belongs to the peptidase M24A family. Methionine aminopeptidase eukaryotic type 2 subfamily. The cofactor is Co(2+). It depends on Zn(2+) as a cofactor. Mn(2+) serves as cofactor. Requires Fe(2+) as cofactor.

It localises to the cytoplasm. It carries out the reaction Release of N-terminal amino acids, preferentially methionine, from peptides and arylamides.. In terms of biological role, cotranslationally removes the N-terminal methionine from nascent proteins. The N-terminal methionine is often cleaved when the second residue in the primary sequence is small and uncharged (Met-Ala-, Cys, Gly, Pro, Ser, Thr, or Val). This Coccidioides posadasii (strain C735) (Valley fever fungus) protein is Methionine aminopeptidase 2.